The chain runs to 231 residues: Protein N-terminal glutamine amidohydrolase (231 aa).

The tract at residues 1–21 (MADDRVAGGATPPPPPPPPPL) is disordered. Residues 11–21 (TPPPPPPPPPL) are compositionally biased toward pro residues. Catalysis depends on residues C33, H89, and D108.

The protein belongs to the NTAQ1 family. In terms of assembly, monomer.

It catalyses the reaction N-terminal L-glutaminyl-[protein] + H2O = N-terminal L-glutamyl-[protein] + NH4(+). Mediates the side-chain deamidation of N-terminal glutamine residues to glutamate, an important step in N-end rule pathway of protein degradation. Conversion of the resulting N-terminal glutamine to glutamate renders the protein susceptible to arginylation, polyubiquitination and degradation as specified by the N-end rule. Does not act on substrates with internal or C-terminal glutamine and does not act on non-glutamine residues in any position. The chain is Protein N-terminal glutamine amidohydrolase from Oryza sativa subsp. indica (Rice).